Reading from the N-terminus, the 139-residue chain is Putative pre-16S rRNA nuclease (139 aa).

It belongs to the YqgF nuclease family.

Its subcellular location is the cytoplasm. Could be a nuclease involved in processing of the 5'-end of pre-16S rRNA. This is Putative pre-16S rRNA nuclease from Streptococcus equi subsp. zooepidemicus (strain H70).